Reading from the N-terminus, the 331-residue chain is Cysteine and histidine-rich domain-containing protein 1 (331 aa).

The residue at position 2 (alanine 2) is an N-acetylalanine. The interaction with PPP5C stretch occupies residues 2 to 77 (ALLCYNRGCG…KPPEPVKPEV (76 aa)). The Zn(2+) site is built by cysteine 5, cysteine 10, cysteine 24, histidine 27, cysteine 42, and cysteine 43. CHORD domains lie at 5 to 64 (CYNR…KGRH) and 157 to 216 (CKNG…RGKH). Threonine 47 is subject to Phosphothreonine. Serine 51 carries the post-translational modification Phosphoserine. Residues cysteine 59, histidine 64, cysteine 157, cysteine 162, cysteine 176, histidine 179, cysteine 194, cysteine 195, cysteine 211, and histidine 216 each coordinate Zn(2+). The interval 62–82 (GRHNSEKPPEPVKPEVKTTEK) is disordered. Residues 64–82 (HNSEKPPEPVKPEVKTTEK) are compositionally biased toward basic and acidic residues. An interaction with HSP90AA1 and HSP90AB1 region spans residues 65–316 (NSEKPPEPVK…AEPMQWASLE (252 aa)). In terms of domain architecture, CS spans 227-316 (VVPCRHDWHQ…AEPMQWASLE (90 aa)).

In terms of assembly, interacts with HSP90AA1, HSP90AB1, PPP5C, ROCK1 and ROCK2.

In terms of biological role, regulates centrosome duplication, probably by inhibiting the kinase activity of ROCK2. Proposed to act as co-chaperone for HSP90. May play a role in the regulation of NOD1 via a HSP90 chaperone complex. In vitro, has intrinsic chaperone activity. This function may be achieved by inhibiting association of ROCK2 with NPM1. Plays a role in ensuring the localization of the tyrosine kinase receptor EGFR to the plasma membrane, and thus ensures the subsequent regulation of EGFR activity and EGF-induced actin cytoskeleton remodeling. Involved in stress response. Prevents tumorigenesis. This is Cysteine and histidine-rich domain-containing protein 1 (Chordc1) from Rattus norvegicus (Rat).